The chain runs to 427 residues: Glutamate-1-semialdehyde 2,1-aminomutase (427 aa).

An N6-(pyridoxal phosphate)lysine modification is found at lysine 267.

Belongs to the class-III pyridoxal-phosphate-dependent aminotransferase family. HemL subfamily. Homodimer. The cofactor is pyridoxal 5'-phosphate.

It is found in the cytoplasm. The catalysed reaction is (S)-4-amino-5-oxopentanoate = 5-aminolevulinate. It functions in the pathway porphyrin-containing compound metabolism; protoporphyrin-IX biosynthesis; 5-aminolevulinate from L-glutamyl-tRNA(Glu): step 2/2. This Citrifermentans bemidjiense (strain ATCC BAA-1014 / DSM 16622 / JCM 12645 / Bem) (Geobacter bemidjiensis) protein is Glutamate-1-semialdehyde 2,1-aminomutase.